The sequence spans 396 residues: Succinyl-CoA:mesaconate CoA-transferase (396 aa).

D175 acts as the Nucleophile in catalysis.

It belongs to the CoA-transferase III family.

It catalyses the reaction mesaconate + succinyl-CoA = 2-methylfumaryl-CoA + succinate. In terms of biological role, involved in the methylaspartate cycle. Catalyzes the transfer of the CoA moiety from succinyl-CoA to mesaconate to generate mesaconyl-CoA (2-methylfumaryl-CoA) and succinate. The sequence is that of Succinyl-CoA:mesaconate CoA-transferase from Haloarcula marismortui (strain ATCC 43049 / DSM 3752 / JCM 8966 / VKM B-1809) (Halobacterium marismortui).